The following is a 469-amino-acid chain: Glutamate--tRNA ligase (469 aa).

The 'HIGH' region motif lies at 11–21 (PSPTGFIHLGN). The span at 114-131 (QREAGEKPRYDGTWRPEP) shows a compositional bias: basic and acidic residues. A disordered region spans residues 114 to 139 (QREAGEKPRYDGTWRPEPGKVLPEPP). Residues 243 to 247 (KMSKR) carry the 'KMSKS' region motif. Lysine 246 is an ATP binding site.

It belongs to the class-I aminoacyl-tRNA synthetase family. Glutamate--tRNA ligase type 1 subfamily. As to quaternary structure, monomer.

The protein localises to the cytoplasm. It carries out the reaction tRNA(Glu) + L-glutamate + ATP = L-glutamyl-tRNA(Glu) + AMP + diphosphate. Functionally, catalyzes the attachment of glutamate to tRNA(Glu) in a two-step reaction: glutamate is first activated by ATP to form Glu-AMP and then transferred to the acceptor end of tRNA(Glu). This Paraburkholderia xenovorans (strain LB400) protein is Glutamate--tRNA ligase.